A 237-amino-acid polypeptide reads, in one-letter code: MPRVRRPAAPTGAATLLALMWLASPALPVGGFSYSEGLEPAVEAGLVSDEATAQAWLLDQLLLGLGRGELAVVAQAVAAWRRGDATRVRELNDWLLSTRESAELRLQTEQMGRSLGAWLQQRPGTDAAALARLLALPPAPSYPVAFALAAAGTPASLREVALAYAFGWAENMVQAAIKAVPLGQSAGQRMLGALVEAIPATVDAALVLRDGERMAFTPMLAVLSARHETQYSRLFRS.

This sequence belongs to the UreF family. As to quaternary structure, ureD, UreF and UreG form a complex that acts as a GTP-hydrolysis-dependent molecular chaperone, activating the urease apoprotein by helping to assemble the nickel containing metallocenter of UreC. The UreE protein probably delivers the nickel.

The protein resides in the cytoplasm. Its function is as follows. Required for maturation of urease via the functional incorporation of the urease nickel metallocenter. This chain is Urease accessory protein UreF, found in Methylibium petroleiphilum (strain ATCC BAA-1232 / LMG 22953 / PM1).